The primary structure comprises 522 residues: E3 ubiquitin-protein ligase DMA2 (522 aa).

Disordered regions lie at residues 1-56 and 69-92; these read MYTP…RPAS and QNSQ…PSNS. Residues 14–35 are compositionally biased toward low complexity; the sequence is APTSSMTSNSSSASNANTTSSS. Residues 36–49 show a composition bias toward polar residues; it reads GINPRNRASGTPSN. S206 carries the phosphoserine modification. Glycyl lysine isopeptide (Lys-Gly) (interchain with G-Cter in ubiquitin) cross-links involve residues K211, K256, K258, K288, K310, K333, K343, K346, K366, K406, K412, and K423. Residues 295 to 358 enclose the FHA domain; that stretch reads LVIGRYTERV…SGTFLNHQRL (64 aa). Residues 433 to 477 form an RING-type zinc finger; that stretch reads CSICLCKIKPCQAIFISPCAHSWHFRCVRRLVMLSYPQFVCPNCR.

The protein belongs to the DMA1 family. Post-translationally, UBC4-dependent autoubiquitination occurs at Lys-211, Lys-258, Lys-288, Lys-310, Lys-333, Lys-343, Lys-346, Lys-366, Lys-406, Lys-412 and Lys-423. UBC4-dependent autoubiquitination is responsible for DMA2 turnover. UBC13/MMS2-dependent autoubiquitination occurs at Lys-258, Lys-310, Lys-346 and Lys-366. Lys-211, Lys-256, Lys-288, Lys-310, Lys-343, Lys-258, Lys-366 and Lys-412 are also ubiquitinated in trans by DMA1 E3 ligase in association with UBC4.

The protein resides in the cytoplasm. The enzyme catalyses S-ubiquitinyl-[E2 ubiquitin-conjugating enzyme]-L-cysteine + [acceptor protein]-L-lysine = [E2 ubiquitin-conjugating enzyme]-L-cysteine + N(6)-ubiquitinyl-[acceptor protein]-L-lysine.. In terms of biological role, E3 ubiquitin-protein ligase which functions in cell cycle retarding in conjunction with the UBC4 and UBC13/MMS2 complex, 2 E2 ubiquitin conjugating enzymes. Involved in nutritional control of the cell cycle. Required for proper spindle positioning, likely regulating septin ring deposition at the bud neck. This Saccharomyces cerevisiae (strain ATCC 204508 / S288c) (Baker's yeast) protein is E3 ubiquitin-protein ligase DMA2 (DMA2).